The primary structure comprises 362 residues: Flagellar P-ring protein (362 aa).

A signal peptide spans 1–15; sequence MLAAALMSAAFGAHA.

Belongs to the FlgI family. The basal body constitutes a major portion of the flagellar organelle and consists of four rings (L,P,S, and M) mounted on a central rod.

Its subcellular location is the periplasm. It localises to the bacterial flagellum basal body. Assembles around the rod to form the L-ring and probably protects the motor/basal body from shearing forces during rotation. This Pseudomonas fluorescens (strain Pf0-1) protein is Flagellar P-ring protein.